A 441-amino-acid chain; its full sequence is Ribulose bisphosphate carboxylase large chain (441 aa).

Lys5 bears the N6,N6,N6-trimethyllysine mark. Thr164 serves as a coordination point for substrate. The active-site Proton acceptor is the Lys166. Substrate is bound at residue Lys168. The Mg(2+) site is built by Lys192, Asp194, and Glu195. Lys192 bears the N6-carboxylysine mark. His285 functions as the Proton acceptor in the catalytic mechanism. Substrate is bound by residues Arg286, His318, and Ser370.

This sequence belongs to the RuBisCO large chain family. Type I subfamily. In terms of assembly, heterohexadecamer of 8 large chains and 8 small chains; disulfide-linked. The disulfide link is formed within the large subunit homodimers. Mg(2+) serves as cofactor. Post-translationally, the disulfide bond which can form in the large chain dimeric partners within the hexadecamer appears to be associated with oxidative stress and protein turnover.

The protein resides in the plastid. It is found in the chloroplast. It carries out the reaction 2 (2R)-3-phosphoglycerate + 2 H(+) = D-ribulose 1,5-bisphosphate + CO2 + H2O. The catalysed reaction is D-ribulose 1,5-bisphosphate + O2 = 2-phosphoglycolate + (2R)-3-phosphoglycerate + 2 H(+). In terms of biological role, ruBisCO catalyzes two reactions: the carboxylation of D-ribulose 1,5-bisphosphate, the primary event in carbon dioxide fixation, as well as the oxidative fragmentation of the pentose substrate in the photorespiration process. Both reactions occur simultaneously and in competition at the same active site. This Hemionitis engywookii (Fendler's false cloak fern) protein is Ribulose bisphosphate carboxylase large chain.